Reading from the N-terminus, the 303-residue chain is Heme A synthase (303 aa).

Over 1 to 8 the chain is Cytoplasmic; sequence MFGKKNLK. The helical transmembrane segment at 9-29 threads the bilayer; it reads WLGVVATLMMTFVQLGGALVT. Residues 30–67 are Extracellular-facing; sequence KTGSADGCGSSWPLCHGALIPEFFPIDTIIELSHRAVS. An intrachain disulfide couples cysteine 37 to cysteine 44. Residue glutamate 60 is part of the active site. Histidine 63 contributes to the heme o binding site. Residues 68–88 traverse the membrane as a helical segment; sequence ALSLLMVLWLVITAWKHIGYI. The Cytoplasmic segment spans residues 89-93; that stretch reads KEIKP. The helical transmembrane segment at 94–114 threads the bilayer; it reads LSIISVGFLLLQALIGAAAVI. Over 115 to 125 the chain is Extracellular; sequence WQQNDYVLALH. Residue histidine 125 participates in heme o binding. Residues 126–146 traverse the membrane as a helical segment; it reads FGISLISFSSVFLITLIIFSI. Topologically, residues 147 to 163 are cytoplasmic; sequence DQKYEADELYIKKPLRR. Residues 164–184 traverse the membrane as a helical segment; that stretch reads LTWLMAIIIYCGVYTGALVRH. The Extracellular portion of the chain corresponds to 185 to 215; the sequence is ADASLAYGGWPLPFHDLVPHSEQDWVQLTHR. A heme b-binding site is contributed by histidine 214. The helical transmembrane segment at 216–236 threads the bilayer; the sequence is IMAFIVFTIIMITYIHAVKNY. The Cytoplasmic portion of the chain corresponds to 237–244; that stretch reads PNNRTVHY. Residues 245–265 traverse the membrane as a helical segment; it reads GYTAAFILVILQVITGALSIM. At 266 to 270 the chain is on the extracellular side; the sequence is TNVNL. Residues 271–291 form a helical membrane-spanning segment; it reads IIALFHALFITYLFGMTTYFI. Heme b is bound at residue histidine 276. The Cytoplasmic segment spans residues 292–303; the sequence is MLMLRSVRSDKQ.

It belongs to the COX15/CtaA family. Type 1 subfamily. Interacts with CtaB. Requires heme b as cofactor.

Its subcellular location is the cell membrane. The catalysed reaction is Fe(II)-heme o + 2 A + H2O = Fe(II)-heme a + 2 AH2. It participates in porphyrin-containing compound metabolism; heme A biosynthesis; heme A from heme O: step 1/1. Catalyzes the conversion of heme O to heme A by two successive hydroxylations of the methyl group at C8. The first hydroxylation forms heme I, the second hydroxylation results in an unstable dihydroxymethyl group, which spontaneously dehydrates, resulting in the formyl group of heme A. This is Heme A synthase from Staphylococcus aureus (strain Mu3 / ATCC 700698).